Consider the following 262-residue polypeptide: 3-methyl-2-oxobutanoate hydroxymethyltransferase (262 aa).

Mg(2+) is bound by residues Asp43 and Asp82. 3-methyl-2-oxobutanoate contacts are provided by residues 43–44, Asp82, and Lys111; that span reads DS. Glu113 serves as a coordination point for Mg(2+). Residue Glu180 is the Proton acceptor of the active site.

The protein belongs to the PanB family. As to quaternary structure, homodecamer; pentamer of dimers. Mg(2+) serves as cofactor.

It is found in the cytoplasm. It catalyses the reaction 3-methyl-2-oxobutanoate + (6R)-5,10-methylene-5,6,7,8-tetrahydrofolate + H2O = 2-dehydropantoate + (6S)-5,6,7,8-tetrahydrofolate. It functions in the pathway cofactor biosynthesis; (R)-pantothenate biosynthesis; (R)-pantoate from 3-methyl-2-oxobutanoate: step 1/2. Its function is as follows. Catalyzes the reversible reaction in which hydroxymethyl group from 5,10-methylenetetrahydrofolate is transferred onto alpha-ketoisovalerate to form ketopantoate. This chain is 3-methyl-2-oxobutanoate hydroxymethyltransferase, found in Wolinella succinogenes (strain ATCC 29543 / DSM 1740 / CCUG 13145 / JCM 31913 / LMG 7466 / NCTC 11488 / FDC 602W) (Vibrio succinogenes).